The chain runs to 300 residues: GTPase Era (300 aa).

The Era-type G domain maps to 6–173; that stretch reads HSGFVAILGR…IESLVNTLPE (168 aa). Residues 14–21 are G1; that stretch reads GRPNVGKS. Position 14 to 21 (14 to 21) interacts with GTP; the sequence is GRPNVGKS. Residues 40–44 are G2; it reads QTTRN. The interval 61 to 64 is G3; it reads DTPG. Residues 61–65 and 123–126 contribute to the GTP site; these read DTPGI and NKID. The G4 stretch occupies residues 123-126; the sequence is NKID. The segment at 152–154 is G5; the sequence is ISA. One can recognise a KH type-2 domain in the interval 204-281; it reads TREEVPHSVA…YLELWVKVQP (78 aa).

Belongs to the TRAFAC class TrmE-Era-EngA-EngB-Septin-like GTPase superfamily. Era GTPase family. Monomer.

Its subcellular location is the cytoplasm. It is found in the cell membrane. An essential GTPase that binds both GDP and GTP, with rapid nucleotide exchange. Plays a role in 16S rRNA processing and 30S ribosomal subunit biogenesis and possibly also in cell cycle regulation and energy metabolism. The chain is GTPase Era from Ligilactobacillus salivarius (strain UCC118) (Lactobacillus salivarius).